A 526-amino-acid polypeptide reads, in one-letter code: mRNA export factor ICP27 homolog (526 aa).

4 residues coordinate Zn(2+): Cys-239, His-344, Cys-346, and Cys-351. A CHC2-type zinc finger spans residues 239–351 (CVFNDNGHGD…NNHQCDDIGC (113 aa)).

It belongs to the HHV-1 ICP27 protein family.

It localises to the virion tegument. The protein localises to the virion. It is found in the host nucleus. Its subcellular location is the host cytoplasm. In terms of biological role, immediate early (EI) protein that plays many roles during productive infection including regulation of viral gene expression and nuclear export of intronless viral RNAs. The protein is mRNA export factor ICP27 homolog of Human herpesvirus 7 (strain JI) (HHV-7).